The chain runs to 78 residues: Probable [Fe-S]-dependent transcriptional repressor (78 aa).

Residues Cys-56, Cys-61, Cys-64, and Cys-70 each coordinate iron-sulfur cluster.

Belongs to the FeoC family.

In terms of biological role, may function as a transcriptional regulator that controls feoABC expression. This Escherichia fergusonii (strain ATCC 35469 / DSM 13698 / CCUG 18766 / IAM 14443 / JCM 21226 / LMG 7866 / NBRC 102419 / NCTC 12128 / CDC 0568-73) protein is Probable [Fe-S]-dependent transcriptional repressor.